We begin with the raw amino-acid sequence, 245 residues long: 1-(5-phosphoribosyl)-5-[(5-phosphoribosylamino)methylideneamino] imidazole-4-carboxamide isomerase (245 aa).

Aspartate 7 serves as the catalytic Proton acceptor. Aspartate 129 (proton donor) is an active-site residue.

This sequence belongs to the HisA/HisF family.

The protein resides in the cytoplasm. It carries out the reaction 1-(5-phospho-beta-D-ribosyl)-5-[(5-phospho-beta-D-ribosylamino)methylideneamino]imidazole-4-carboxamide = 5-[(5-phospho-1-deoxy-D-ribulos-1-ylimino)methylamino]-1-(5-phospho-beta-D-ribosyl)imidazole-4-carboxamide. Its pathway is amino-acid biosynthesis; L-histidine biosynthesis; L-histidine from 5-phospho-alpha-D-ribose 1-diphosphate: step 4/9. The polypeptide is 1-(5-phosphoribosyl)-5-[(5-phosphoribosylamino)methylideneamino] imidazole-4-carboxamide isomerase (Aliivibrio fischeri (strain MJ11) (Vibrio fischeri)).